The sequence spans 127 residues: uncharacterized protein (127 aa).

The first 16 residues, 1–16 (MLKKIIFGITISLTTG), serve as a signal peptide directing secretion. A lipid anchor (N-palmitoyl cysteine) is attached at cysteine 17. A lipid anchor (S-diacylglycerol cysteine) is attached at cysteine 17. Positions 56-101 (EVREEIQKYRVEIVDINKKKRELYNRLSKEAQSFLAEQQKYKQKLS) form a coiled coil. The tract at residues 102 to 127 (IPKLLIENDPKNNTANSKDNNDKDMK) is disordered.

The protein resides in the cell membrane. This is an uncharacterized protein from Rickettsia prowazekii (strain Madrid E).